The following is a 159-amino-acid chain: RNA pyrophosphohydrolase (159 aa).

Residues 6-149 (GFRPNVGIIL…KREVYRRALK (144 aa)) enclose the Nudix hydrolase domain. The Nudix box motif lies at 38 to 59 (GGINPQETPEDALYRELNEEVG).

Belongs to the Nudix hydrolase family. RppH subfamily. It depends on a divalent metal cation as a cofactor.

In terms of biological role, accelerates the degradation of transcripts by removing pyrophosphate from the 5'-end of triphosphorylated RNA, leading to a more labile monophosphorylated state that can stimulate subsequent ribonuclease cleavage. This Pseudomonas savastanoi pv. phaseolicola (strain 1448A / Race 6) (Pseudomonas syringae pv. phaseolicola (strain 1448A / Race 6)) protein is RNA pyrophosphohydrolase.